The chain runs to 103 residues: Large ribosomal subunit protein bL21 (103 aa).

Belongs to the bacterial ribosomal protein bL21 family. Part of the 50S ribosomal subunit. Contacts protein L20.

In terms of biological role, this protein binds to 23S rRNA in the presence of protein L20. This Lactobacillus johnsonii (strain CNCM I-12250 / La1 / NCC 533) protein is Large ribosomal subunit protein bL21.